The chain runs to 591 residues: V-type ATP synthase alpha chain (591 aa).

Residue 233-240 (GPFGAGKT) coordinates ATP.

The protein belongs to the ATPase alpha/beta chains family.

It carries out the reaction ATP + H2O + 4 H(+)(in) = ADP + phosphate + 5 H(+)(out). Its function is as follows. Produces ATP from ADP in the presence of a proton gradient across the membrane. The V-type alpha chain is a catalytic subunit. The chain is V-type ATP synthase alpha chain from Streptococcus pyogenes serotype M5 (strain Manfredo).